The chain runs to 388 residues: Na(+)/H(+) antiporter NhaA (388 aa).

11 helical membrane passes run 8–28, 57–77, 93–113, 123–143, 152–172, 175–195, 210–230, 254–274, 278–298, 328–348, and 361–381; these read FFSA…LGLL, LAEF…IAEI, ILPL…YGLI, GWAI…LALG, VWLM…IALF, SHLN…MIGL, GVVL…AGVI, IIAP…SMGM, AMSF…GLFL, LFGL…IAEL, and YGIL…LRFL.

The protein belongs to the NhaA Na(+)/H(+) (TC 2.A.33) antiporter family.

The protein localises to the cell inner membrane. The catalysed reaction is Na(+)(in) + 2 H(+)(out) = Na(+)(out) + 2 H(+)(in). Its function is as follows. Na(+)/H(+) antiporter that extrudes sodium in exchange for external protons. In Zymomonas mobilis subsp. mobilis (strain ATCC 31821 / ZM4 / CP4), this protein is Na(+)/H(+) antiporter NhaA.